The sequence spans 155 residues: Ribosomal RNA large subunit methyltransferase H (155 aa).

S-adenosyl-L-methionine is bound by residues Leu73, Gly104, and 123 to 128 (LSPLTL).

It belongs to the RNA methyltransferase RlmH family. As to quaternary structure, homodimer.

It is found in the cytoplasm. The enzyme catalyses pseudouridine(1915) in 23S rRNA + S-adenosyl-L-methionine = N(3)-methylpseudouridine(1915) in 23S rRNA + S-adenosyl-L-homocysteine + H(+). Its function is as follows. Specifically methylates the pseudouridine at position 1915 (m3Psi1915) in 23S rRNA. The sequence is that of Ribosomal RNA large subunit methyltransferase H from Ectopseudomonas mendocina (strain ymp) (Pseudomonas mendocina).